Consider the following 282-residue polypeptide: Armadillo repeat-containing protein 1 (282 aa).

Met1 carries the N-acetylmethionine modification. Residues 39–81 (GCLPGLILSMDHPNPPVVHSALLALRYLAECRANREKMKGELG) form an ARM repeat. Thr137 carries the phosphothreonine modification. Phosphoserine is present on residues Ser189, Ser246, Ser260, and Ser267. The tract at residues 239 to 261 (DYLPEDESPTKEQDKAVSRVGSH) is disordered. Over residues 246–255 (SPTKEQDKAV) the composition is skewed to basic and acidic residues.

Interacts with mitochondrial contact site and cristae organizing system (MICOS) complex components IMMT/MIC60 and MICOS10/MIC10. Interacts with mitochondrial outer membrane sorting assembly machinery (SAM) complex components SAMM50 and MTX1.

It is found in the cytoplasm. It localises to the mitochondrion. Its subcellular location is the mitochondrion outer membrane. In terms of biological role, in association with mitochondrial contact site and cristae organizing system (MICOS) complex components and mitochondrial outer membrane sorting assembly machinery (SAM) complex components may regulate mitochondrial dynamics playing a role in determining mitochondrial length, distribution and motility. This Pongo abelii (Sumatran orangutan) protein is Armadillo repeat-containing protein 1 (ARMC1).